We begin with the raw amino-acid sequence, 432 residues long: N-acylneuraminate cytidylyltransferase (432 aa).

An N-acetylmethionine modification is found at M1. The tract at residues 1–38 (MDALEKGAATSGPAPRGRPSRGRPPKLQRSRGAGRGLE) is disordered. Positions 15 to 31 (PRGRPSRGRPPKLQRSR) match the BC1 motif motif. A compositionally biased stretch (basic residues) spans 18 to 29 (RPSRGRPPKLQR). Omega-N-methylarginine is present on residues R35 and R50. Substrate is bound by residues R50, N60, R109, S118, S120, and Q141. Residues 198 to 204 (KRPRRQD) carry the BC2 motif motif. R199 is a catalytic residue. A BC3 motif motif is present at residues 267 to 274 (KEKLKEIK).

Belongs to the CMP-NeuNAc synthase family. As to quaternary structure, homotetramer; the active enzyme is formed by a dimer of dimers. Liver.

It is found in the nucleus. The catalysed reaction is an N-acylneuraminate + CTP = a CMP-N-acyl-beta-neuraminate + diphosphate. Its pathway is amino-sugar metabolism; N-acetylneuraminate metabolism. Functionally, catalyzes the activation of N-acetylneuraminic acid (NeuNAc) to cytidine 5'-monophosphate N-acetylneuraminic acid (CMP-NeuNAc), a substrate required for the addition of sialic acid. Has some activity toward NeuNAc, N-glycolylneuraminic acid (Neu5Gc) or 2-keto-3-deoxy-D-glycero-D-galacto-nononic acid (KDN). The sequence is that of N-acylneuraminate cytidylyltransferase (Cmas) from Rattus norvegicus (Rat).